The chain runs to 417 residues: GTP-binding protein YPT11 (417 aa).

The disordered stretch occupies residues methionine 1–glutamate 34. Residues glycine 97–threonine 104, aspartate 228–glutamine 232, and asparagine 292–aspartate 295 each bind GTP. Residues cysteine 415 and cysteine 416 are each lipidated (S-geranylgeranyl cysteine).

The protein belongs to the small GTPase superfamily. Rab family. Interacts with MYO2 (via C-terminal tail domain). Interacts with YIF1, YIP3, YIP4 and YIP5.

The protein localises to the endoplasmic reticulum membrane. It is found in the bud tip. It localises to the bud neck. Its function is as follows. Involved in the positive control of both endoplasmic reticulum (ER) and mitochondrion inheritance during cell divison. Required for the MYO2-dependent retention of newly inherited mitochondria at the bud tip in developing daughter cells. The sequence is that of GTP-binding protein YPT11 (YPT11) from Saccharomyces cerevisiae (strain RM11-1a) (Baker's yeast).